Here is a 198-residue protein sequence, read N- to C-terminus: NADH-quinone oxidoreductase subunit B (198 aa).

Residues 1–20 (MGLNPTQVSTSGSPQVSQPA) show a composition bias toward polar residues. Residues 1-29 (MGLNPTQVSTSGSPQVSQPATGVLDPRTG) are disordered. Residues Cys-77, Cys-78, Cys-142, and Cys-172 each contribute to the [4Fe-4S] cluster site.

Belongs to the complex I 20 kDa subunit family. NDH-1 is composed of 14 different subunits. Subunits NuoB, C, D, E, F, and G constitute the peripheral sector of the complex. It depends on [4Fe-4S] cluster as a cofactor.

Its subcellular location is the cell inner membrane. It carries out the reaction a quinone + NADH + 5 H(+)(in) = a quinol + NAD(+) + 4 H(+)(out). Its function is as follows. NDH-1 shuttles electrons from NADH, via FMN and iron-sulfur (Fe-S) centers, to quinones in the respiratory chain. The immediate electron acceptor for the enzyme in this species is believed to be ubiquinone. Couples the redox reaction to proton translocation (for every two electrons transferred, four hydrogen ions are translocated across the cytoplasmic membrane), and thus conserves the redox energy in a proton gradient. This is NADH-quinone oxidoreductase subunit B from Afipia carboxidovorans (strain ATCC 49405 / DSM 1227 / KCTC 32145 / OM5) (Oligotropha carboxidovorans).